Here is a 491-residue protein sequence, read N- to C-terminus: Cytochrome P450 2B9 (491 aa).

The residue at position 128 (Ser-128) is a Phosphoserine; by PKA. Cys-436 is a heme binding site.

Belongs to the cytochrome P450 family. Heme serves as cofactor.

It localises to the endoplasmic reticulum membrane. The protein resides in the microsome membrane. The enzyme catalyses an organic molecule + reduced [NADPH--hemoprotein reductase] + O2 = an alcohol + oxidized [NADPH--hemoprotein reductase] + H2O + H(+). Its function is as follows. Cytochromes P450 are a group of heme-thiolate monooxygenases. In liver microsomes, this enzyme is involved in an NADPH-dependent electron transport pathway. It oxidizes a variety of structurally unrelated compounds, including steroids, fatty acids, and xenobiotics. In Mus musculus (Mouse), this protein is Cytochrome P450 2B9 (Cyp2b9).